Consider the following 884-residue polypeptide: Protein P (884 aa).

The tract at residues 1 to 184 (MHPFSRLFRN…GKPYSWEHRQ (184 aa)) is terminal protein domain (TP). The spacer stretch occupies residues 185–387 (LVQHNGQQHK…YCIHHIVSSL (203 aa)). A disordered region spans residues 299 to 345 (RNSGHTTWFSSASNSNKSRSREKAYSSNSTSKRYSPPLNYEKSDFSS). The polymerase/reverse transcriptase domain (RT) stretch occupies residues 388–729 (DDWGPCTVTG…YEELWPVVRQ (342 aa)). The 242-residue stretch at 398–639 (DVTIKSPRTP…NHLHFMGYVI (242 aa)) folds into the Reverse transcriptase domain. Mg(2+) contacts are provided by Asp-470, Asp-590, and Asp-591.

The protein belongs to the hepadnaviridae P protein family.

It catalyses the reaction DNA(n) + a 2'-deoxyribonucleoside 5'-triphosphate = DNA(n+1) + diphosphate. The catalysed reaction is Endonucleolytic cleavage to 5'-phosphomonoester.. Activated by host HSP70 and HSP40 in vitro to be able to bind the epsilon loop of the pgRNA. Because deletion of the RNase H region renders the protein partly chaperone-independent, the chaperones may be needed indirectly to relieve occlusion of the RNA-binding site by this domain. Inhibited by several reverse-transcriptase inhibitors: Lamivudine, Adefovir and Entecavir. Multifunctional enzyme that converts the viral RNA genome into dsDNA in viral cytoplasmic capsids. This enzyme displays a DNA polymerase activity that can copy either DNA or RNA templates, and a ribonuclease H (RNase H) activity that cleaves the RNA strand of RNA-DNA heteroduplexes in a partially processive 3'- to 5'-endonucleasic mode. Neo-synthesized pregenomic RNA (pgRNA) are encapsidated together with the P protein, and reverse-transcribed inside the nucleocapsid. Initiation of reverse-transcription occurs first by binding the epsilon loop on the pgRNA genome, and is initiated by protein priming, thereby the 5'-end of (-)DNA is covalently linked to P protein. Partial (+)DNA is synthesized from the (-)DNA template and generates the relaxed circular DNA (RC-DNA) genome. After budding and infection, the RC-DNA migrates in the nucleus, and is converted into a plasmid-like covalently closed circular DNA (cccDNA). The activity of P protein does not seem to be necessary for cccDNA generation, and is presumably released from (+)DNA by host nuclear DNA repair machinery. This Woodchuck hepatitis B virus (isolate 7) (WHV) protein is Protein P.